A 236-amino-acid polypeptide reads, in one-letter code: Probable calcium-binding protein CML30 (236 aa).

The disordered stretch occupies residues 43 to 64; sequence VVVVAKKRPEEEPRRPDPDADL. Residues 49–60 are compositionally biased toward basic and acidic residues; that stretch reads KRPEEEPRRPDP. 2 consecutive EF-hand domains span residues 59-94 and 96-131; these read DPDA…LGIA and SSAA…IPKR. Ca(2+) is bound by residues Asp72, Asp74, Asp76, Glu83, Asp109, Asn111, Asp113, and Glu120. Residues 130-158 are disordered; sequence KRRKSHQQHPLPSTAAADEEAAAADEEYE. Residues 146-158 show a composition bias toward acidic residues; the sequence is ADEEAAAADEEYE. EF-hand domains lie at 161-196 and 202-236; these read EEER…LGLR and PAVA…VVKA. 9 residues coordinate Ca(2+): Asp174, Asn176, Asp178, Glu185, Asp215, Asp217, Asp219, Met221, and Glu226.

Potential calcium sensor. The protein is Probable calcium-binding protein CML30 (CML30) of Oryza sativa subsp. japonica (Rice).